A 480-amino-acid chain; its full sequence is tRNA modification GTPase MnmE (480 aa).

Positions 20, 114, and 154 each coordinate (6S)-5-formyl-5,6,7,8-tetrahydrofolate. One can recognise a TrmE-type G domain in the interval 250–406 (GLKLAIIGPP…ILKNIENIAE (157 aa)). Residue N260 participates in K(+) binding. GTP-binding positions include 260-265 (NVGKSS), 279-285 (SNIAGTT), and 304-307 (DTAG). Residue S264 coordinates Mg(2+). The K(+) site is built by S279, I281, and T284. Mg(2+) is bound at residue T285. K480 contributes to the (6S)-5-formyl-5,6,7,8-tetrahydrofolate binding site.

It belongs to the TRAFAC class TrmE-Era-EngA-EngB-Septin-like GTPase superfamily. TrmE GTPase family. Homodimer. Heterotetramer of two MnmE and two MnmG subunits. K(+) serves as cofactor.

The protein resides in the cytoplasm. Its function is as follows. Exhibits a very high intrinsic GTPase hydrolysis rate. Involved in the addition of a carboxymethylaminomethyl (cmnm) group at the wobble position (U34) of certain tRNAs, forming tRNA-cmnm(5)s(2)U34. The chain is tRNA modification GTPase MnmE from Rickettsia felis (strain ATCC VR-1525 / URRWXCal2) (Rickettsia azadi).